We begin with the raw amino-acid sequence, 347 residues long: Gamma-glutamyl hydrolase B (347 aa).

A signal peptide spans 1-22 (MIKLFSLFIYLYLISNLKLINT). One can recognise a Gamma-glutamyl hydrolase domain in the interval 23 to 314 (INNTPVIGIL…THVEQIYIFN (292 aa)). C128 (nucleophile) is an active-site residue. 3 N-linked (GlcNAc...) asparagine glycosylation sites follow: N152, N158, and N201. H240 (proton donor) is an active-site residue. N273, N314, and N318 each carry an N-linked (GlcNAc...) asparagine glycan.

This sequence belongs to the peptidase C26 family.

It localises to the secreted. It is found in the extracellular space. It carries out the reaction (6S)-5,6,7,8-tetrahydrofolyl-(gamma-L-Glu)(n) + (n-1) H2O = (6S)-5,6,7,8-tetrahydrofolate + (n-1) L-glutamate. The polypeptide is Gamma-glutamyl hydrolase B (gghB) (Dictyostelium discoideum (Social amoeba)).